Consider the following 374-residue polypeptide: 4-hydroxybenzoate polyprenyltransferase, mitochondrial (374 aa).

The transit peptide at 1 to 34 directs the protein to the mitochondrion; sequence MLRWGGAGLARGLRAVRSAWLRGPRGLPLALVRS. Topologically, residues 35–83 are mitochondrial matrix; it reads AGVPGARDRRAPAPGTQRGRALSLSAAAVVNSAPRPLQPYLRLMRLDKP. Residues 84–104 form a helical membrane-spanning segment; the sequence is IGTWLLYLPCTWSIGLAADPG. Residues 105-108 lie on the Mitochondrial intermembrane side of the membrane; the sequence is CFPD. The chain crosses the membrane as a helical span at residues 109–129; sequence WYMLSLFGTGAILMRGAGCTI. At 130-148 the chain is on the mitochondrial matrix side; that stretch reads NDMWDRDFDKKVTRTANRP. The helical transmembrane segment at 149-169 threads the bilayer; sequence IAAGDISTFQSFVFLGGQLTL. Residues 170–172 lie on the Mitochondrial intermembrane side of the membrane; the sequence is ALG. A helical transmembrane segment spans residues 173–193; that stretch reads VLLCLNYYSIAMGAASLLLVV. Residues 194–200 are Mitochondrial matrix-facing; sequence TYPLVKR. Residues 201–221 traverse the membrane as a helical segment; that stretch reads ITFWPQLALGLTFNWGALLGW. At 222–230 the chain is on the mitochondrial intermembrane side; it reads SAVKGSCDP. Residues 231 to 251 form a helical membrane-spanning segment; it reads AVCLPLYFSGVMWTLIYDTIY. The Mitochondrial matrix segment spans residues 252-277; it reads AHQDKKDDALIGLKSTALLFQENTRQ. Residues 278–298 form a helical membrane-spanning segment; sequence WLSGFGVAMVAALSLAGANNG. Residues 299–332 are Mitochondrial intermembrane-facing; the sequence is QTVPYYAAVAAVGAHLAHQIYTVDIHRAEDCWDK. The chain crosses the membrane as a helical span at residues 333 to 353; that stretch reads FTSNRTVGMLLFLGIVLGNLC. The Mitochondrial matrix portion of the chain corresponds to 354-374; it reads KEKTEEAKDAEAVRVGSEQTS.

It belongs to the UbiA prenyltransferase family. The cofactor is Mg(2+).

The protein localises to the mitochondrion inner membrane. The enzyme catalyses an all-trans-polyprenyl diphosphate + 4-hydroxybenzoate = a 4-hydroxy-3-(all-trans-polyprenyl)benzoate + diphosphate. It carries out the reaction all-trans-decaprenyl diphosphate + 4-hydroxybenzoate = 4-hydroxy-3-(all-trans-decaprenyl)benzoate + diphosphate. It catalyses the reaction all-trans-nonaprenyl diphosphate + 4-hydroxybenzoate = 4-hydroxy-3-(all-trans-nonaprenyl)benzoate + diphosphate. Its pathway is cofactor biosynthesis; ubiquinone biosynthesis. In terms of biological role, mediates the second step in the final reaction sequence of coenzyme Q (CoQ) biosynthesis. Catalyzes the prenylation of para-hydroxybenzoate (PHB) with an all-trans polyprenyl donor (such as all-trans-nonaprenyl diphosphate). The length of the polyprenyl side chain varies depending on the species, in humans, the side chain is comprised of 10 isoprenyls producing CoQ10 (also known as ubiquinone), whereas rodents predominantly generate CoQ9. However, this specificity is not complete, human tissues have low amounts of CoQ9 and rodent organs contain some CoQ10. Plays a central role in the biosynthesis of CoQ9. CoQ9 is a vital molecule that transports electrons from mitochondrial respiratory chain complexes. CoQs also function as cofactors for uncoupling protein and play a role as regulators of the extracellularly-induced ceramide-dependent apoptotic pathway. Regulates mitochondrial permeability transition pore (mPTP) opening and ROS production (pivotal events in cell death) in a tissue specific manner. The protein is 4-hydroxybenzoate polyprenyltransferase, mitochondrial of Mus musculus (Mouse).